The following is a 406-amino-acid chain: Tyrosine--tRNA ligase (406 aa).

Y35 provides a ligand contact to L-tyrosine. A 'HIGH' region motif is present at residues 40 to 49; that stretch reads PTADSLHVGH. L-tyrosine is bound by residues Y168 and Q172. A 'KMSKS' region motif is present at residues 228–232; that stretch reads KMGKT. ATP is bound at residue K231. Residues 340–404 enclose the S4 RNA-binding domain; sequence LPILDVMAST…RGKKNYNKIE (65 aa).

The protein belongs to the class-I aminoacyl-tRNA synthetase family. TyrS type 1 subfamily. Homodimer.

The protein localises to the cytoplasm. It carries out the reaction tRNA(Tyr) + L-tyrosine + ATP = L-tyrosyl-tRNA(Tyr) + AMP + diphosphate + H(+). Catalyzes the attachment of tyrosine to tRNA(Tyr) in a two-step reaction: tyrosine is first activated by ATP to form Tyr-AMP and then transferred to the acceptor end of tRNA(Tyr). This chain is Tyrosine--tRNA ligase, found in Clostridium beijerinckii (strain ATCC 51743 / NCIMB 8052) (Clostridium acetobutylicum).